A 658-amino-acid polypeptide reads, in one-letter code: DNA mismatch repair protein MutL (658 aa).

The segment covering R114–K130 has biased composition (basic and acidic residues). 3 disordered regions span residues R114–A137, D369–Q401, and F438–G457.

The protein belongs to the DNA mismatch repair MutL/HexB family.

Its function is as follows. This protein is involved in the repair of mismatches in DNA. It is required for dam-dependent methyl-directed DNA mismatch repair. May act as a 'molecular matchmaker', a protein that promotes the formation of a stable complex between two or more DNA-binding proteins in an ATP-dependent manner without itself being part of a final effector complex. The polypeptide is DNA mismatch repair protein MutL (Neisseria meningitidis serogroup A / serotype 4A (strain DSM 15465 / Z2491)).